The sequence spans 128 residues: 3-aminoacrylate deaminase RutC (128 aa).

This sequence belongs to the RutC family.

The enzyme catalyses (Z)-3-aminoacrylate + H2O + H(+) = 3-oxopropanoate + NH4(+). Functionally, involved in pyrimidine catabolism. Catalyzes the deamination of 3-aminoacrylate to malonic semialdehyde, a reaction that can also occur spontaneously. RutC may facilitate the reaction and modulate the metabolic fitness, rather than catalyzing essential functions. This Agrobacterium fabrum (strain C58 / ATCC 33970) (Agrobacterium tumefaciens (strain C58)) protein is 3-aminoacrylate deaminase RutC.